The sequence spans 381 residues: MAKRDYYEVLGVSRTASADELKKAYRTKAKELHPDRNADNPQAEAQFKEVNEAYDVLRDADKKAAYDRYGHAAFEGGMGGGARAGGYGQQGDFASAFSDVFEDLFGDFMGGRGGAPRSRAQRGSDLRYNLRVTLDEAYRGVQKTINVPASVACDACKGTGAEGGAEAVTCPTCSGMGKVRAQQGFFTVERTCPTCNGMGQIVKNPCKVCHGAGRVEKERSLSVNIPAGVETGTRIRLAGEGEAGMRGGPSGDLYIFIEVREHALFQRDGVHLFCRVPVSIAAAALGGEVEVPTIDGGSSRVKIPAGSQTGKQMRLRGKGMPALRGGGAGDMLIELAVETPVNLTARQKELLREFEKLSEDNNPEGKSFFSKVKGFWDGMTG.

Residues 5–70 (DYYEVLGVSR…DKKAAYDRYG (66 aa)) enclose the J domain. The CR-type zinc finger occupies 140-218 (GVQKTINVPA…CHGAGRVEKE (79 aa)). Residues C153, C156, C170, C173, C192, C195, C206, and C209 each contribute to the Zn(2+) site. 4 CXXCXGXG motif repeats span residues 153 to 160 (CDACKGTG), 170 to 177 (CPTCSGMG), 192 to 199 (CPTCNGMG), and 206 to 213 (CKVCHGAG).

The protein belongs to the DnaJ family. In terms of assembly, homodimer. Zn(2+) serves as cofactor.

Its subcellular location is the cytoplasm. In terms of biological role, participates actively in the response to hyperosmotic and heat shock by preventing the aggregation of stress-denatured proteins and by disaggregating proteins, also in an autonomous, DnaK-independent fashion. Unfolded proteins bind initially to DnaJ; upon interaction with the DnaJ-bound protein, DnaK hydrolyzes its bound ATP, resulting in the formation of a stable complex. GrpE releases ADP from DnaK; ATP binding to DnaK triggers the release of the substrate protein, thus completing the reaction cycle. Several rounds of ATP-dependent interactions between DnaJ, DnaK and GrpE are required for fully efficient folding. Also involved, together with DnaK and GrpE, in the DNA replication of plasmids through activation of initiation proteins. The polypeptide is Chaperone protein DnaJ (Cereibacter sphaeroides (strain KD131 / KCTC 12085) (Rhodobacter sphaeroides)).